Here is a 37-residue protein sequence, read N- to C-terminus: Large ribosomal subunit protein bL36 (37 aa).

It belongs to the bacterial ribosomal protein bL36 family.

This Acidithiobacillus ferrooxidans (strain ATCC 23270 / DSM 14882 / CIP 104768 / NCIMB 8455) (Ferrobacillus ferrooxidans (strain ATCC 23270)) protein is Large ribosomal subunit protein bL36.